The primary structure comprises 62 residues: Large ribosomal subunit protein eL37 (62 aa).

Positions 20, 23, 35, and 38 each coordinate Zn(2+). The segment at 20–38 (CRRCGRHSFNVAKGYCAAC) adopts a C4-type zinc-finger fold.

The protein belongs to the eukaryotic ribosomal protein eL37 family. It depends on Zn(2+) as a cofactor.

Its function is as follows. Binds to the 23S rRNA. In Desulfurococcus amylolyticus (strain DSM 18924 / JCM 16383 / VKM B-2413 / 1221n) (Desulfurococcus kamchatkensis), this protein is Large ribosomal subunit protein eL37.